The chain runs to 800 residues: Endoglucanase (800 aa).

The N-terminal stretch at 1–30 (MMLRKKTKQLISSILILVLLLSLFPTALAA) is a signal peptide. The active-site Proton donor is Glu190. Glu305 (nucleophile) is an active-site residue. The segment at 761–800 (AATTEPVEPEPVDPGEETPPVDEKEAKTEQKEAEKEEKEE) is disordered. Positions 767–780 (VEPEPVDPGEETPP) are enriched in acidic residues. Residues 781 to 800 (VDEKEAKTEQKEAEKEEKEE) show a composition bias toward basic and acidic residues.

Belongs to the glycosyl hydrolase 5 (cellulase A) family.

It carries out the reaction Endohydrolysis of (1-&gt;4)-beta-D-glucosidic linkages in cellulose, lichenin and cereal beta-D-glucans.. The sequence is that of Endoglucanase from Halalkalibacter akibai (strain ATCC 43226 / DSM 21942 / CIP 109018 / JCM 9157 / 1139) (Bacillus akibai).